A 283-amino-acid chain; its full sequence is Quinate/shikimate dehydrogenase (NAD(+)) (283 aa).

Ser-17, Thr-69, Lys-73, Asn-94, and Asp-110 together coordinate shikimate. L-quinate contacts are provided by residues 17-19, Thr-69, Lys-73, Asn-94, and Asp-110; that span reads SRT. Lys-73 serves as the catalytic Proton acceptor. NAD(+) contacts are provided by residues 137 to 138, Asp-158, Arg-163, 203 to 206, Ala-213, Val-228, and Gly-251; these read GV and PMGM. Shikimate is bound at residue Gln-258. Gln-258 contacts L-quinate.

It belongs to the shikimate dehydrogenase family. In terms of assembly, homodimer.

It carries out the reaction L-quinate + NAD(+) = 3-dehydroquinate + NADH + H(+). The enzyme catalyses shikimate + NAD(+) = 3-dehydroshikimate + NADH + H(+). It functions in the pathway metabolic intermediate biosynthesis; chorismate biosynthesis; chorismate from D-erythrose 4-phosphate and phosphoenolpyruvate: step 4/7. Its pathway is aromatic compound metabolism; 3,4-dihydroxybenzoate biosynthesis; 3-dehydroquinate from D-quinate (NAD(+) route). Its function is as follows. Involved in the biosynthesis of the chorismate, which leads to the biosynthesis of aromatic amino acids, and plays a key role in the quinate degradation pathway. Catalyzes the NAD(+)-dependent oxidation of both quinate and shikimate to 3-dehydroquinate and 3-dehydroshikimate, respectively. This chain is Quinate/shikimate dehydrogenase (NAD(+)), found in Corynebacterium glutamicum (strain R).